We begin with the raw amino-acid sequence, 204 residues long: MAYMNRSDLDKLKHENIFSGNIIEDAKEFVFGSRKIYTDSVDDLIELYSLAKYLNNENLKDVVIERMDYVCKYIGKDNWSTIYSFYKENGLRNSFLRQYINNNIEEICNTDQFLKLDVDSVCDILDNDEIVVTREYTILNMVLRWLENKRVNIDDFTKVMFVIRFKFITYSELTNAIKKIAPEYRQCLQDLYHMKITRPRHFDN.

The 83-residue stretch at 95 to 177 (FLRQYINNNI…ITYSELTNAI (83 aa)) folds into the BACK domain.

The protein belongs to the orthopoxvirus OPG030 family.

This is Protein OPG030 (OPG30) from Bos taurus (Bovine).